Here is a 269-residue protein sequence, read N- to C-terminus: 3-methyl-2-oxobutanoate hydroxymethyltransferase (269 aa).

2 residues coordinate Mg(2+): D43 and D82. Residues 43 to 44 (DS), D82, and K110 each bind 3-methyl-2-oxobutanoate. E112 is a Mg(2+) binding site. Catalysis depends on E179, which acts as the Proton acceptor.

The protein belongs to the PanB family. In terms of assembly, homodecamer; pentamer of dimers. The cofactor is Mg(2+).

Its subcellular location is the cytoplasm. The enzyme catalyses 3-methyl-2-oxobutanoate + (6R)-5,10-methylene-5,6,7,8-tetrahydrofolate + H2O = 2-dehydropantoate + (6S)-5,6,7,8-tetrahydrofolate. Its pathway is cofactor biosynthesis; (R)-pantothenate biosynthesis; (R)-pantoate from 3-methyl-2-oxobutanoate: step 1/2. In terms of biological role, catalyzes the reversible reaction in which hydroxymethyl group from 5,10-methylenetetrahydrofolate is transferred onto alpha-ketoisovalerate to form ketopantoate. The polypeptide is 3-methyl-2-oxobutanoate hydroxymethyltransferase (Acinetobacter baumannii (strain AB307-0294)).